The following is a 430-amino-acid chain: Glutamate-1-semialdehyde 2,1-aminomutase (430 aa).

N6-(pyridoxal phosphate)lysine is present on Lys-265.

The protein belongs to the class-III pyridoxal-phosphate-dependent aminotransferase family. HemL subfamily. Homodimer. Requires pyridoxal 5'-phosphate as cofactor.

The protein resides in the cytoplasm. The enzyme catalyses (S)-4-amino-5-oxopentanoate = 5-aminolevulinate. It functions in the pathway porphyrin-containing compound metabolism; protoporphyrin-IX biosynthesis; 5-aminolevulinate from L-glutamyl-tRNA(Glu): step 2/2. The polypeptide is Glutamate-1-semialdehyde 2,1-aminomutase (Helicobacter pylori (strain HPAG1)).